The following is a 340-amino-acid chain: Ketol-acid reductoisomerase (NADP(+)) (340 aa).

A KARI N-terminal Rossmann domain is found at 1–182 (MTVTMQYEKD…GSARVGLLET (182 aa)). NADP(+) is bound by residues 26–29 (YGSQ), Arg49, Ser53, and 83–86 (DEIQ). Residue His108 is part of the active site. Gly134 lines the NADP(+) pocket. The region spanning 183–328 (TFKEETEEDL…AELRKAMPFV (146 aa)) is the KARI C-terminal knotted domain. Residues Asp191, Glu195, Glu227, and Glu231 each coordinate Mg(2+). Residue Ser252 coordinates substrate.

Belongs to the ketol-acid reductoisomerase family. It depends on Mg(2+) as a cofactor.

The enzyme catalyses (2R)-2,3-dihydroxy-3-methylbutanoate + NADP(+) = (2S)-2-acetolactate + NADPH + H(+). It catalyses the reaction (2R,3R)-2,3-dihydroxy-3-methylpentanoate + NADP(+) = (S)-2-ethyl-2-hydroxy-3-oxobutanoate + NADPH + H(+). Its pathway is amino-acid biosynthesis; L-isoleucine biosynthesis; L-isoleucine from 2-oxobutanoate: step 2/4. The protein operates within amino-acid biosynthesis; L-valine biosynthesis; L-valine from pyruvate: step 2/4. Involved in the biosynthesis of branched-chain amino acids (BCAA). Catalyzes an alkyl-migration followed by a ketol-acid reduction of (S)-2-acetolactate (S2AL) to yield (R)-2,3-dihydroxy-isovalerate. In the isomerase reaction, S2AL is rearranged via a Mg-dependent methyl migration to produce 3-hydroxy-3-methyl-2-ketobutyrate (HMKB). In the reductase reaction, this 2-ketoacid undergoes a metal-dependent reduction by NADPH to yield (R)-2,3-dihydroxy-isovalerate. This chain is Ketol-acid reductoisomerase (NADP(+)), found in Streptococcus suis (strain 98HAH33).